The following is a 542-amino-acid chain: MNGRRTIGEDGLVFGLVVIVALVAAVVVGTVLGHRYRVGPPVLLILSGSLLGLIPRFGDVQIDGEVVLLLFLPAILYWESMNTSFREIRWNLRVIVMFSIGLVIATAVAVSWTARALGMESHAAAVLGAVLSPTDAAAVAGLAKRLPRRALTVLRGESLINDGTALVLFAVTVAVAEGAAGIGPAALVGRFVVSYLGGIMAGLLVGGLVTLLRRRIDAPLEEGALSLLTPFAAFLLAQSLKCSGVVAVLVSALVLTYVGPTVIRARSRLQAHAFWDIATFLINGSLWVFVGVQIPGAIDHIAGEDGGLPRATVLALAVTGVVIATRIAWVQATTVLGHTVDRVLKKPTRHVGFRQRCVTSWAGFRGAVSLAAALAVPMTTNSGAPFPDRNLIIFVVSVVILVTVLVQGTSLPTVVRWARMPEDVAHANELQLARTRSAQAALDALPTVADELGVAPDLVKHLEKEYEERAVLVMADGADSATSDLAERNDLVRRVRLGVLQHQRQAVTTLRNQNLIDDIVLRELQAAMDLEEVQLLDPADAE.

The next 12 helical transmembrane spans lie at Leu-12–Leu-32, Phe-57–Tyr-77, Val-94–Ala-114, Ala-123–Ala-143, Leu-168–Val-188, Phe-191–Leu-211, Ile-216–Leu-236, Ser-243–Ile-263, Ile-277–Ala-297, Val-313–Thr-333, Val-358–Met-378, and Leu-391–Leu-411.

Belongs to the monovalent cation:proton antiporter 1 (CPA1) transporter (TC 2.A.36) family.

The protein resides in the cell membrane. This is an uncharacterized protein from Mycobacterium bovis (strain ATCC BAA-935 / AF2122/97).